Here is a 475-residue protein sequence, read N- to C-terminus: UDP-glycosyltransferase 84A4 (475 aa).

Residue His-20 is the Proton acceptor of the active site. His-20 contributes to the an anthocyanidin binding site. UDP-alpha-D-glucose-binding residues include Gln-342, His-357, Trp-360, Asn-361, Ser-362, and Glu-365. An anthocyanidin is bound at residue Gly-380. UDP-alpha-D-glucose-binding residues include Asp-381 and Gln-382.

It belongs to the UDP-glycosyltransferase family.

The catalysed reaction is (E)-4-coumarate + UDP-alpha-D-glucose = 4-O-(beta-D-glucosyl)-trans-4-coumarate + UDP + H(+). It catalyses the reaction (E)-ferulate + UDP-alpha-D-glucose = 1-O-[(E)-feruloyl]-beta-D-glucose + UDP. The enzyme catalyses (E)-caffeate + UDP-alpha-D-glucose = 1-O-[(E)-caffeoyl]-beta-D-glucose + UDP. It carries out the reaction (E)-sinapate + UDP-alpha-D-glucose = 1-O-(trans-sinapoyl)-beta-D-glucose + UDP. The catalysed reaction is (E)-cinnamate + UDP-alpha-D-glucose = 1-O-(trans-cinnamoyl)-beta-D-glucose + UDP. Its function is as follows. UDP-glucosyltransferase that forms glucose esters with phenylpropanoids. Glucosylates 4-coumarate, ferulate, caffeate, sinapate and cinnamate. The protein is UDP-glycosyltransferase 84A4 of Arabidopsis thaliana (Mouse-ear cress).